We begin with the raw amino-acid sequence, 558 residues long: CTP synthase (558 aa).

The tract at residues 1–266 is amidoligase domain; it reads MSAKYIFVTG…DRLVMKYLRL (266 aa). S14 contributes to the CTP binding site. Position 14 (S14) interacts with UTP. Residues 15–20 and D72 each bind ATP; that span reads SLGKGL. Mg(2+)-binding residues include D72 and E140. Residues 147-149, 187-192, and K223 each bind CTP; these read DIE and KTKPTQ. Residues 187–192 and K223 each bind UTP; that span reads KTKPTQ. 239–241 contacts ATP; sequence KDV. The Glutamine amidotransferase type-1 domain occupies 291-537; that stretch reads IIGIIGKYVE…IGASYEHRMK (247 aa). G355 lines the L-glutamine pocket. C382 (nucleophile; for glutamine hydrolysis) is an active-site residue. Residues 383 to 386, E406, and R463 contribute to the L-glutamine site; that span reads LGMQ. Active-site residues include H510 and E512. The disordered stretch occupies residues 539 to 558; that stretch reads THTKEREEESVFLRPERVGK. A compositionally biased stretch (basic and acidic residues) spans 542 to 558; that stretch reads KEREEESVFLRPERVGK.

The protein belongs to the CTP synthase family. As to quaternary structure, homotetramer.

It catalyses the reaction UTP + L-glutamine + ATP + H2O = CTP + L-glutamate + ADP + phosphate + 2 H(+). The enzyme catalyses L-glutamine + H2O = L-glutamate + NH4(+). The catalysed reaction is UTP + NH4(+) + ATP = CTP + ADP + phosphate + 2 H(+). It functions in the pathway pyrimidine metabolism; CTP biosynthesis via de novo pathway; CTP from UDP: step 2/2. Allosterically activated by GTP, when glutamine is the substrate; GTP has no effect on the reaction when ammonia is the substrate. The allosteric effector GTP functions by stabilizing the protein conformation that binds the tetrahedral intermediate(s) formed during glutamine hydrolysis. Inhibited by the product CTP, via allosteric rather than competitive inhibition. Catalyzes the ATP-dependent amination of UTP to CTP with either L-glutamine or ammonia as the source of nitrogen. Regulates intracellular CTP levels through interactions with the four ribonucleotide triphosphates. This Koribacter versatilis (strain Ellin345) protein is CTP synthase.